The primary structure comprises 541 residues: Zingiberene synthase (541 aa).

5 residues coordinate Mg(2+): D295, D299, N439, S443, and E447. The DDXXD motif signature appears at 295 to 299 (DDIID).

Belongs to the terpene synthase family. Requires Mg(2+) as cofactor. Mn(2+) serves as cofactor.

It localises to the cytoplasm. The catalysed reaction is (2E,6E)-farnesyl diphosphate = alpha-zingiberene + diphosphate. It functions in the pathway secondary metabolite biosynthesis; terpenoid biosynthesis. Its function is as follows. Sesquiterpene synthase converting farnesyl diphosphate into two major products, zingiberene &gt; beta-sesquiphellandrene, and five minor products, 7-epi-sesquithujene, sesquisabinene A, (E)-alpha-bergamotene, (E)-beta-farnesene and beta-bisabolene. Can also accept geranyl diphosphate as substrate, producing nine monoterpenes, with myrcene, limonene and alpha-terpinolene as the major products. The chain is Zingiberene synthase (TPS1) from Sorghum bicolor (Sorghum).